The primary structure comprises 1295 residues: Phosphoribosylformylglycinamidine synthase (1295 aa).

Positions tryptophan 305–lysine 327 are disordered. ATP contacts are provided by residues glycine 307 to aspartate 318 and alanine 678. Mg(2+) contacts are provided by glutamate 718, asparagine 722, and aspartate 884. Serine 886 lines the ATP pocket. The region spanning valine 1042 to glycine 1295 is the Glutamine amidotransferase type-1 domain. The active-site Nucleophile is the cysteine 1135. Active-site residues include histidine 1260 and glutamate 1262.

It in the N-terminal section; belongs to the FGAMS family. Monomer.

The protein localises to the cytoplasm. It carries out the reaction N(2)-formyl-N(1)-(5-phospho-beta-D-ribosyl)glycinamide + L-glutamine + ATP + H2O = 2-formamido-N(1)-(5-O-phospho-beta-D-ribosyl)acetamidine + L-glutamate + ADP + phosphate + H(+). It participates in purine metabolism; IMP biosynthesis via de novo pathway; 5-amino-1-(5-phospho-D-ribosyl)imidazole from N(2)-formyl-N(1)-(5-phospho-D-ribosyl)glycinamide: step 1/2. Functionally, phosphoribosylformylglycinamidine synthase involved in the purines biosynthetic pathway. Catalyzes the ATP-dependent conversion of formylglycinamide ribonucleotide (FGAR) and glutamine to yield formylglycinamidine ribonucleotide (FGAM) and glutamate. The protein is Phosphoribosylformylglycinamidine synthase of Shigella sonnei (strain Ss046).